Consider the following 476-residue polypeptide: UDP-N-acetylmuramate--L-alanine ligase (476 aa).

126–132 (GAHGKTT) is a binding site for ATP.

The protein belongs to the MurCDEF family.

The protein resides in the cytoplasm. It catalyses the reaction UDP-N-acetyl-alpha-D-muramate + L-alanine + ATP = UDP-N-acetyl-alpha-D-muramoyl-L-alanine + ADP + phosphate + H(+). It functions in the pathway cell wall biogenesis; peptidoglycan biosynthesis. In terms of biological role, cell wall formation. In Psychrobacter sp. (strain PRwf-1), this protein is UDP-N-acetylmuramate--L-alanine ligase.